A 384-amino-acid polypeptide reads, in one-letter code: tRNA-specific 2-thiouridylase MnmA (384 aa).

Residues 21–28 (GMSGGVDS) and methionine 47 each bind ATP. Residues 107 to 109 (NPD) form an interaction with target base in tRNA region. Residue cysteine 112 is the Nucleophile of the active site. Residues cysteine 112 and cysteine 208 are joined by a disulfide bond. Glycine 136 contacts ATP. Positions 158–160 (KDQ) are interaction with tRNA. Catalysis depends on cysteine 208, which acts as the Cysteine persulfide intermediate. An interaction with tRNA region spans residues 320–321 (RY).

Belongs to the MnmA/TRMU family.

The protein localises to the cytoplasm. The catalysed reaction is S-sulfanyl-L-cysteinyl-[protein] + uridine(34) in tRNA + AH2 + ATP = 2-thiouridine(34) in tRNA + L-cysteinyl-[protein] + A + AMP + diphosphate + H(+). Its function is as follows. Catalyzes the 2-thiolation of uridine at the wobble position (U34) of tRNA, leading to the formation of s(2)U34. The polypeptide is tRNA-specific 2-thiouridylase MnmA (Chromohalobacter salexigens (strain ATCC BAA-138 / DSM 3043 / CIP 106854 / NCIMB 13768 / 1H11)).